A 329-amino-acid chain; its full sequence is DNA-directed RNA polymerase subunit alpha (329 aa).

The alpha N-terminal domain (alpha-NTD) stretch occupies residues M1 to R235. An alpha C-terminal domain (alpha-CTD) region spans residues F249 to N329.

Belongs to the RNA polymerase alpha chain family. In terms of assembly, homodimer. The RNAP catalytic core consists of 2 alpha, 1 beta, 1 beta' and 1 omega subunit. When a sigma factor is associated with the core the holoenzyme is formed, which can initiate transcription.

It carries out the reaction RNA(n) + a ribonucleoside 5'-triphosphate = RNA(n+1) + diphosphate. In terms of biological role, DNA-dependent RNA polymerase catalyzes the transcription of DNA into RNA using the four ribonucleoside triphosphates as substrates. The sequence is that of DNA-directed RNA polymerase subunit alpha from Tolumonas auensis (strain DSM 9187 / NBRC 110442 / TA 4).